We begin with the raw amino-acid sequence, 312 residues long: Protein YIPF2 (312 aa).

Ala2 bears the N-acetylalanine mark. Residues 2 to 121 lie on the Cytoplasmic side of the membrane; it reads AAADELAFHE…LRNRPDLYGP (120 aa). A helical transmembrane segment spans residues 122–142; the sequence is FWICATLAFVLAVTGNLTLVL. Topologically, residues 143-160 are lumenal; that stretch reads AQRRDPSIHYSPQFHKVT. A helical transmembrane segment spans residues 161–181; the sequence is IAGITIYCYAWLVPLALWGFL. Topologically, residues 182–193 are cytoplasmic; the sequence is RWRQGTRERMGL. Residues 194 to 216 form a helical membrane-spanning segment; the sequence is YTFLETVCVYGYSLFVFIPTVVL. The Lumenal portion of the chain corresponds to 217–228; that stretch reads WLIPVQWIQWLF. A helical membrane pass occupies residues 229–249; it reads GALGLALSAAGLVFTLWPVVR. The Cytoplasmic segment spans residues 250–253; that stretch reads EDTR. Residues 254-274 form a helical membrane-spanning segment; it reads LVAAALLSTVVLLHALLALGC. At 275 to 312 the chain is on the lumenal side; sequence KLYFFQPLPLDHVVPAPQATPPSPNVLLPSSIQPMTTS.

It belongs to the YIP1 family. In terms of assembly, interacts with YIPF6; this interaction may stabilize YIPF2. May also form a ternary complex with YIPF1 and YIPF6.

The protein resides in the golgi apparatus. It localises to the cis-Golgi network membrane. The protein localises to the trans-Golgi network membrane. It is found in the late endosome membrane. This Mus musculus (Mouse) protein is Protein YIPF2 (Yipf2).